Here is a 180-residue protein sequence, read N- to C-terminus: Large ribosomal subunit protein uL5 (180 aa).

The protein belongs to the universal ribosomal protein uL5 family. As to quaternary structure, part of the 50S ribosomal subunit; part of the 5S rRNA/L5/L18/L25 subcomplex. Contacts the 5S rRNA and the P site tRNA. Forms a bridge to the 30S subunit in the 70S ribosome.

In terms of biological role, this is one of the proteins that bind and probably mediate the attachment of the 5S RNA into the large ribosomal subunit, where it forms part of the central protuberance. In the 70S ribosome it contacts protein S13 of the 30S subunit (bridge B1b), connecting the 2 subunits; this bridge is implicated in subunit movement. Contacts the P site tRNA; the 5S rRNA and some of its associated proteins might help stabilize positioning of ribosome-bound tRNAs. This chain is Large ribosomal subunit protein uL5, found in Cupriavidus necator (strain ATCC 17699 / DSM 428 / KCTC 22496 / NCIMB 10442 / H16 / Stanier 337) (Ralstonia eutropha).